The following is a 388-amino-acid chain: Succinate--CoA ligase [ADP-forming] subunit beta (388 aa).

One can recognise an ATP-grasp domain in the interval 9 to 244 (KEIFARYGLP…PTQESELEVK (236 aa)). Residues Lys46, 53-55 (GRG), Glu99, Thr102, and Glu107 contribute to the ATP site. 2 residues coordinate Mg(2+): Asn199 and Asp213. Substrate contacts are provided by residues Asn264 and 321-323 (GIL).

This sequence belongs to the succinate/malate CoA ligase beta subunit family. As to quaternary structure, heterotetramer of two alpha and two beta subunits. Mg(2+) serves as cofactor.

It catalyses the reaction succinate + ATP + CoA = succinyl-CoA + ADP + phosphate. The enzyme catalyses GTP + succinate + CoA = succinyl-CoA + GDP + phosphate. Its pathway is carbohydrate metabolism; tricarboxylic acid cycle; succinate from succinyl-CoA (ligase route): step 1/1. Functionally, succinyl-CoA synthetase functions in the citric acid cycle (TCA), coupling the hydrolysis of succinyl-CoA to the synthesis of either ATP or GTP and thus represents the only step of substrate-level phosphorylation in the TCA. The beta subunit provides nucleotide specificity of the enzyme and binds the substrate succinate, while the binding sites for coenzyme A and phosphate are found in the alpha subunit. The sequence is that of Succinate--CoA ligase [ADP-forming] subunit beta from Persephonella marina (strain DSM 14350 / EX-H1).